A 184-amino-acid polypeptide reads, in one-letter code: Protein PLANT CADMIUM RESISTANCE 5 (184 aa).

Over residues 1-26 (MGRPVGQTNQAQPSVQHTASPSNKVS) the composition is skewed to polar residues. Residues 1–33 (MGRPVGQTNQAQPSVQHTASPSNKVSHNGGIGK) form a disordered region. The chain crosses the membrane as a helical span at residues 94–114 (AGLLYGALFFTGASFVYSYMF).

This sequence belongs to the cornifelin family.

The protein localises to the membrane. May be involved in heavy metals transport. The chain is Protein PLANT CADMIUM RESISTANCE 5 (PCR5) from Arabidopsis thaliana (Mouse-ear cress).